A 554-amino-acid polypeptide reads, in one-letter code: MFCIQCEQTIRTPAGNGCSYSQGMCGKLAATSDLQDLLIYMLQGVSVYAVKAREQGIIDAEIDSFVPKAFFSTLTNVNFDDERIMAYAQQAAHYRAQLKASYEAACEQAGIAVEQVPQVAQLVLGTSKIEMLAQAPIALLNKDKHDVHEDIMGLRLLCLYGLKGAAAYMEHARVLGQTDADVAGRFHEIMSFLGEPSVDGDKLFTTAMDIGQLNYRIMAMLDAGETQAFGHPEPTVVNTKSVKGKAILVSGHDMKDLELILEQTVGKGINVFTHGEMLPALAYPAFKKYPHLVGNYGSAWQNQQQEFANFPGAVVMTSNCIIDPNVGSYSDRIFTRSIVGWPGVVHIEGDDFSAVIDKALALEGFIYDEIPHTITIGFARNALMAAAPAVVENVKSGAIKHFFLVGGCDGDKADRSYFTELAKSTPKDSLILTLGCGKYKFNKLEFGDINGIPRLLDVGQCNDAYSAIQLAIALAEVFECDINELPLSLVLSWFEQKAIVVLLTLLSLGVKNIRTGPTPPAFLTANLAKILEEKFGLRNTTTVEADLKTMLNVA.

Cys-3, Cys-6, Cys-18, and Cys-25 together coordinate [2Fe-2S] cluster. Residues His-252, Glu-276, Cys-320, Cys-408, Cys-436, Cys-461, Glu-495, and Lys-497 each coordinate hybrid [4Fe-2O-2S] cluster. At Cys-408 the chain carries Cysteine persulfide.

Belongs to the HCP family. The cofactor is [2Fe-2S] cluster. Requires hybrid [4Fe-2O-2S] cluster as cofactor.

It localises to the cytoplasm. The catalysed reaction is A + NH4(+) + H2O = hydroxylamine + AH2 + H(+). Catalyzes the reduction of hydroxylamine to form NH(3) and H(2)O. This chain is Hydroxylamine reductase, found in Shewanella baltica (strain OS185).